Here is a 71-residue protein sequence, read N- to C-terminus: HSEGTFSNDYSKYLETRRAQDFVQWLMNSXXXXXXXXHADGTYTSDVSSYLQEQAAKDFITWLKSGQPKPE.

It belongs to the glucagon family.

Its subcellular location is the secreted. Functionally, plays a key role in glucose metabolism and homeostasis. Regulates blood glucose by increasing gluconeogenesis and decreasing glycolysis. The protein is Pro-glucagon (gcg) of Ictalurus punctatus (Channel catfish).